Here is a 103-residue protein sequence, read N- to C-terminus: Histone H4 (103 aa).

A compositionally biased stretch (gly residues) spans 1–14; that stretch reads MSGRGKGGKGLGKG. The disordered stretch occupies residues 1–20; sequence MSGRGKGGKGLGKGGAKRHR. Residue Ser-2 is modified to N-acetylserine. Lys-17 carries the post-translational modification N6-acetyllysine. The DNA-binding element occupies 17 to 21; the sequence is KRHRK. At Lys-21 the chain carries N6-methyllysine.

It belongs to the histone H4 family. The nucleosome is a histone octamer containing two molecules each of H2A, H2B, H3 and H4 assembled in one H3-H4 heterotetramer and two H2A-H2B heterodimers. The octamer wraps approximately 147 bp of DNA.

Its subcellular location is the nucleus. It localises to the chromosome. Core component of nucleosome. Nucleosomes wrap and compact DNA into chromatin, limiting DNA accessibility to the cellular machineries which require DNA as a template. Histones thereby play a central role in transcription regulation, DNA repair, DNA replication and chromosomal stability. DNA accessibility is regulated via a complex set of post-translational modifications of histones, also called histone code, and nucleosome remodeling. The polypeptide is Histone H4 (Pyrenomonas salina).